The sequence spans 137 residues: Small heat shock protein IbpA (137 aa).

In terms of domain architecture, sHSP spans 28-137; sequence SQSNGGYPPY…ANKPRRIEIN (110 aa).

The protein belongs to the small heat shock protein (HSP20) family. Monomer. Forms homomultimers of about 100-150 subunits at optimal growth temperatures. Conformation changes to monomers at high temperatures or high ionic concentrations.

It localises to the cytoplasm. Its function is as follows. Associates with aggregated proteins, together with IbpB, to stabilize and protect them from irreversible denaturation and extensive proteolysis during heat shock and oxidative stress. Aggregated proteins bound to the IbpAB complex are more efficiently refolded and reactivated by the ATP-dependent chaperone systems ClpB and DnaK/DnaJ/GrpE. Its activity is ATP-independent. The polypeptide is Small heat shock protein IbpA (Klebsiella pneumoniae (strain 342)).